Consider the following 287-residue polypeptide: Ribosomal RNA small subunit methyltransferase A (287 aa).

Asn28, Leu30, Gly55, Glu77, Asp103, and Asn123 together coordinate S-adenosyl-L-methionine.

It belongs to the class I-like SAM-binding methyltransferase superfamily. rRNA adenine N(6)-methyltransferase family. RsmA subfamily.

Its subcellular location is the cytoplasm. The enzyme catalyses adenosine(1518)/adenosine(1519) in 16S rRNA + 4 S-adenosyl-L-methionine = N(6)-dimethyladenosine(1518)/N(6)-dimethyladenosine(1519) in 16S rRNA + 4 S-adenosyl-L-homocysteine + 4 H(+). Specifically dimethylates two adjacent adenosines (A1518 and A1519) in the loop of a conserved hairpin near the 3'-end of 16S rRNA in the 30S particle. May play a critical role in biogenesis of 30S subunits. The chain is Ribosomal RNA small subunit methyltransferase A from Nitrobacter winogradskyi (strain ATCC 25391 / DSM 10237 / CIP 104748 / NCIMB 11846 / Nb-255).